The chain runs to 367 residues: Chorismate synthase (367 aa).

Arg-48 contributes to the NADP(+) binding site. FMN-binding positions include 125 to 127 (RSS), 238 to 239 (NA), Gly-278, 293 to 297 (KPTSS), and Arg-319.

It belongs to the chorismate synthase family. In terms of assembly, homotetramer. FMNH2 is required as a cofactor.

The catalysed reaction is 5-O-(1-carboxyvinyl)-3-phosphoshikimate = chorismate + phosphate. The protein operates within metabolic intermediate biosynthesis; chorismate biosynthesis; chorismate from D-erythrose 4-phosphate and phosphoenolpyruvate: step 7/7. Its function is as follows. Catalyzes the anti-1,4-elimination of the C-3 phosphate and the C-6 proR hydrogen from 5-enolpyruvylshikimate-3-phosphate (EPSP) to yield chorismate, which is the branch point compound that serves as the starting substrate for the three terminal pathways of aromatic amino acid biosynthesis. This reaction introduces a second double bond into the aromatic ring system. The protein is Chorismate synthase of Halorhodospira halophila (strain DSM 244 / SL1) (Ectothiorhodospira halophila (strain DSM 244 / SL1)).